The primary structure comprises 385 residues: Chaperone protein DnaJ (385 aa).

Residues 5-70 (DYYEVLGVAK…QKRAAYDRFG (66 aa)) enclose the J domain. The segment at 141–219 (GKTETIRIPT…CSGAGRVNRE (79 aa)) adopts a CR-type zinc-finger fold. Zn(2+) is bound by residues Cys154, Cys157, Cys171, Cys174, Cys193, Cys196, Cys207, and Cys210. 4 CXXCXGXG motif repeats span residues 154-161 (CETCSGTG), 171-178 (CSTCGGYG), 193-200 (CPNCHGRG), and 207-214 (CTACSGAG).

The protein belongs to the DnaJ family. In terms of assembly, homodimer. Zn(2+) is required as a cofactor.

Its subcellular location is the cytoplasm. Participates actively in the response to hyperosmotic and heat shock by preventing the aggregation of stress-denatured proteins and by disaggregating proteins, also in an autonomous, DnaK-independent fashion. Unfolded proteins bind initially to DnaJ; upon interaction with the DnaJ-bound protein, DnaK hydrolyzes its bound ATP, resulting in the formation of a stable complex. GrpE releases ADP from DnaK; ATP binding to DnaK triggers the release of the substrate protein, thus completing the reaction cycle. Several rounds of ATP-dependent interactions between DnaJ, DnaK and GrpE are required for fully efficient folding. Also involved, together with DnaK and GrpE, in the DNA replication of plasmids through activation of initiation proteins. The sequence is that of Chaperone protein DnaJ from Methylorubrum extorquens (strain PA1) (Methylobacterium extorquens).